The following is a 239-amino-acid chain: Probable transcriptional regulatory protein Sca_0317 (239 aa).

The protein belongs to the TACO1 family. YeeN subfamily.

The protein resides in the cytoplasm. The sequence is that of Probable transcriptional regulatory protein Sca_0317 from Staphylococcus carnosus (strain TM300).